A 648-amino-acid polypeptide reads, in one-letter code: Acetyl-coenzyme A synthetase (648 aa).

CoA is bound by residues 190–193 (RGGK), threonine 308, and asparagine 332. ATP-binding positions include 384 to 386 (GEP), 408 to 413 (DTWWQT), aspartate 497, and arginine 512. Serine 520 serves as a coordination point for CoA. Arginine 523 serves as a coordination point for ATP. Positions 534, 536, and 539 each coordinate Mg(2+). Arginine 581 lines the CoA pocket. Lysine 606 carries the N6-acetyllysine modification.

It belongs to the ATP-dependent AMP-binding enzyme family. Mg(2+) serves as cofactor. Acetylated. Deacetylation by the SIR2-homolog deacetylase activates the enzyme.

The enzyme catalyses acetate + ATP + CoA = acetyl-CoA + AMP + diphosphate. Functionally, catalyzes the conversion of acetate into acetyl-CoA (AcCoA), an essential intermediate at the junction of anabolic and catabolic pathways. AcsA undergoes a two-step reaction. In the first half reaction, AcsA combines acetate with ATP to form acetyl-adenylate (AcAMP) intermediate. In the second half reaction, it can then transfer the acetyl group from AcAMP to the sulfhydryl group of CoA, forming the product AcCoA. This is Acetyl-coenzyme A synthetase from Bradyrhizobium diazoefficiens (strain JCM 10833 / BCRC 13528 / IAM 13628 / NBRC 14792 / USDA 110).